The following is a 554-amino-acid chain: Phosphomethylpyrimidine synthase (554 aa).

Substrate contacts are provided by residues Asn-191, Met-220, Tyr-249, His-285, 305-307 (SRG), 346-349 (DGLR), and Glu-385. Residue His-389 coordinates Zn(2+). A substrate-binding site is contributed by Tyr-412. Zn(2+) is bound at residue His-453. The [4Fe-4S] cluster site is built by Cys-533, Cys-536, and Cys-541.

It belongs to the ThiC family. As to quaternary structure, homodimer. The cofactor is [4Fe-4S] cluster.

The catalysed reaction is 5-amino-1-(5-phospho-beta-D-ribosyl)imidazole + S-adenosyl-L-methionine = 4-amino-2-methyl-5-(phosphooxymethyl)pyrimidine + CO + 5'-deoxyadenosine + formate + L-methionine + 3 H(+). It functions in the pathway cofactor biosynthesis; thiamine diphosphate biosynthesis. In terms of biological role, catalyzes the synthesis of the hydroxymethylpyrimidine phosphate (HMP-P) moiety of thiamine from aminoimidazole ribotide (AIR) in a radical S-adenosyl-L-methionine (SAM)-dependent reaction. In Ehrlichia chaffeensis (strain ATCC CRL-10679 / Arkansas), this protein is Phosphomethylpyrimidine synthase.